The following is a 356-amino-acid chain: Inositol monophosphatase 3 (356 aa).

The chain crosses the membrane as a helical span at residues 11–31 (LGIGVFCLLGLGVLYHVYSGF). Mg(2+)-binding residues include E127, D167, L169, D170, and D293. E127 contacts substrate. Residues 169 to 172 (LDAT) and D293 each bind substrate.

Belongs to the inositol monophosphatase superfamily. The cofactor is Mg(2+).

It is found in the membrane. The enzyme catalyses a myo-inositol phosphate + H2O = myo-inositol + phosphate. It functions in the pathway polyol metabolism; myo-inositol biosynthesis; myo-inositol from D-glucose 6-phosphate: step 2/2. The sequence is that of Inositol monophosphatase 3 (bpnt2) from Xenopus tropicalis (Western clawed frog).